A 514-amino-acid chain; its full sequence is Na(+)/H(+) antiporter NhaB (514 aa).

The next 12 helical transmembrane spans lie at 23–43 (LALLVFLIVNPFIFLANPFIA), 63–83 (PLLPGGLLAIEAVIIGMTSAA), 97–117 (LLLMFMVAGIYFMKQLLLFIF), 120–140 (LLLSIRSKMVLSLAFCVAAAF), 144–164 (FLDALTVVAVVISVAVGFYGI), 202–222 (LMMHAGVGTALGGVMTMVGEP), 238–258 (FFLRMSPVTVPVLVCGLLTCM), 303–323 (AIIGVWLVTALALHLAEVGLI), 357–377 (LTVFFSIVAVIIDQHLFAPII), 391–411 (LFYLFNGLLSSISDNVFVGTI), 447–467 (ATPNGQAAFLFLLTSALAPLI), and 475–495 (VWMALPYTIVLTLIGLLCVEF).

This sequence belongs to the NhaB Na(+)/H(+) (TC 2.A.34) antiporter family.

It localises to the cell inner membrane. It carries out the reaction 2 Na(+)(in) + 3 H(+)(out) = 2 Na(+)(out) + 3 H(+)(in). Its function is as follows. Na(+)/H(+) antiporter that extrudes sodium in exchange for external protons. This Salmonella heidelberg (strain SL476) protein is Na(+)/H(+) antiporter NhaB.